A 511-amino-acid chain; its full sequence is Glycoprotein (511 aa).

The signal sequence occupies residues 1 to 16; that stretch reads MKCLLYLAFLFIGVNC. Residues 17 to 467 lie on the Virion surface side of the membrane; it reads KFTIVFPHNQ…FSSWKSSIAS (451 aa). The interval 18-35 is trimerization; the sequence is FTIVFPHNQKGNWKNVPS. 6 cysteine pairs are disulfide-bonded: C40/C300, C75/C108, C84/C130, C169/C174, C193/C240, and C235/C269. The fusion peptide stretch occupies residues 53 to 172; that stretch reads IGTALQVKMP…QFINGKCSND (120 aa). The N-linked (GlcNAc...) asparagine; by host glycan is linked to N179. The interval 259–309 is trimerization; sequence DLFAAARFPECPEGSSISAPSQTSVDVSLIQDVERILDYSLCQETWSKIRA. N-linked (GlcNAc...) asparagine; by host glycosylation is present at N336. The interval 383–405 is trimerization; that stretch reads EIGPNGVLRTSLGYKFPLYMIGH. The helical transmembrane segment at 468–488 threads the bilayer; that stretch reads FFFIIGLIIGLFLVLRVGIYL. Residue C489 is the site of S-palmitoyl cysteine; by host attachment. Residues 489 to 511 lie on the Intravirion side of the membrane; it reads CIKLKHTKKRQIYTDIEMNRLGK. The short motif at 496-506 is the basolateral targeting ex vivo element; that stretch reads KKRQIYTDIEM.

This sequence belongs to the vesiculovirus glycoprotein family. As to quaternary structure, homotrimer. Interacts with host LDL at target cell surface. In terms of processing, glycosylated by host. Palmitoylated by host.

The protein localises to the virion membrane. The protein resides in the host membrane. Its function is as follows. Attaches the virus to host LDL receptors, inducing clathrin-dependent endocytosis of the virion. In the endosome, the acidic pH induces conformational changes in the glycoprotein trimer, which trigger fusion between virus and endosomal membrane. This chain is Glycoprotein (G), found in Vesicular stomatitis Indiana virus (strain Orsay) (VSIV).